A 235-amino-acid polypeptide reads, in one-letter code: Acyl-protein thioesterase 1 (235 aa).

Active-site charge relay system residues include Ser-125, Asp-181, and His-213.

Belongs to the AB hydrolase superfamily. AB hydrolase 2 family.

It is found in the cytoplasm. The protein localises to the nucleus. It catalyses the reaction S-hexadecanoyl-L-cysteinyl-[protein] + H2O = L-cysteinyl-[protein] + hexadecanoate + H(+). Functionally, hydrolyzes fatty acids from S-acylated cysteine residues in proteins with a strong preference for palmitoylated G-alpha proteins over other acyl substrates. Mediates the deacylation of G-alpha proteins such as GPA1 in vivo, but has weak or no activity toward palmitoylated Ras proteins. Has weak lysophospholipase activity in vitro; however such activity may not exist in vivo. The protein is Acyl-protein thioesterase 1 of Gibberella zeae (strain ATCC MYA-4620 / CBS 123657 / FGSC 9075 / NRRL 31084 / PH-1) (Wheat head blight fungus).